The sequence spans 247 residues: Ubiquinone biosynthesis O-methyltransferase (247 aa).

The S-adenosyl-L-methionine site is built by Arg41, Gly72, Asp93, and Met136.

The protein belongs to the methyltransferase superfamily. UbiG/COQ3 family.

The enzyme catalyses a 3-demethylubiquinol + S-adenosyl-L-methionine = a ubiquinol + S-adenosyl-L-homocysteine + H(+). The catalysed reaction is a 3-(all-trans-polyprenyl)benzene-1,2-diol + S-adenosyl-L-methionine = a 2-methoxy-6-(all-trans-polyprenyl)phenol + S-adenosyl-L-homocysteine + H(+). The protein operates within cofactor biosynthesis; ubiquinone biosynthesis. Functionally, O-methyltransferase that catalyzes the 2 O-methylation steps in the ubiquinone biosynthetic pathway. The protein is Ubiquinone biosynthesis O-methyltransferase of Bartonella tribocorum (strain CIP 105476 / IBS 506).